A 151-amino-acid chain; its full sequence is UPF0735 ACT domain-containing protein SAUSA300_1599 (151 aa).

Residues 74–149 (TLILYVTDIV…YVSKVELISM (76 aa)) form the ACT domain.

This sequence belongs to the UPF0735 family.

This chain is UPF0735 ACT domain-containing protein SAUSA300_1599, found in Staphylococcus aureus (strain USA300).